The chain runs to 229 residues: 2,3-bisphosphoglycerate-dependent phosphoglycerate mutase (229 aa).

Substrate is bound by residues 7–14 (RHGQSEWN), 20–21 (TG), Arg-59, 86–89 (ERHY), Lys-97, 113–114 (RR), and 182–183 (GN). His-8 acts as the Tele-phosphohistidine intermediate in catalysis. The active-site Proton donor/acceptor is the Glu-86.

Belongs to the phosphoglycerate mutase family. BPG-dependent PGAM subfamily.

The catalysed reaction is (2R)-2-phosphoglycerate = (2R)-3-phosphoglycerate. It participates in carbohydrate degradation; glycolysis; pyruvate from D-glyceraldehyde 3-phosphate: step 3/5. Functionally, catalyzes the interconversion of 2-phosphoglycerate and 3-phosphoglycerate. The polypeptide is 2,3-bisphosphoglycerate-dependent phosphoglycerate mutase (Listeria monocytogenes serotype 4b (strain F2365)).